The sequence spans 88 residues: Cell division topological specificity factor (88 aa).

Belongs to the MinE family.

In terms of biological role, prevents the cell division inhibition by proteins MinC and MinD at internal division sites while permitting inhibition at polar sites. This ensures cell division at the proper site by restricting the formation of a division septum at the midpoint of the long axis of the cell. In Aromatoleum aromaticum (strain DSM 19018 / LMG 30748 / EbN1) (Azoarcus sp. (strain EbN1)), this protein is Cell division topological specificity factor.